Reading from the N-terminus, the 675-residue chain is 1,4-alpha-glucan branching enzyme TK1436 (675 aa).

The Nucleophile role is filled by Glu183. Arg261 and Gly278 together coordinate substrate. Asp354 (proton donor) is an active-site residue. Substrate-binding residues include Trp407, Asp467, and Gln476. 2 disordered regions span residues 537–563 (PELE…KVLT) and 581–627 (EETR…LSIK). 2 stretches are compositionally biased toward basic and acidic residues: residues 549 to 563 (PPEK…KVLT) and 581 to 595 (EETR…EASK). A compositionally biased stretch (basic residues) spans 596–616 (RGKRKSSKSKRLPRKVSKKAP).

Belongs to the glycosyl hydrolase 57 family. As to quaternary structure, monomer.

The enzyme catalyses Transfers a segment of a (1-&gt;4)-alpha-D-glucan chain to a primary hydroxy group in a similar glucan chain.. Catalyzes the formation of branch points in alpha-glucans by cleavage of an alpha-1,4 glycosidic bond and subsequent transfer of the cleaved-off oligosaccharide to a new alpha-1,6 position. The branch chain-length distribution of the reaction products shows degree of polymerization (DP) of 5 to 30, with two local maxima at DP 6 and DP 11. Exhibits an alpha-retaining catalytic mechanism. Does not display alpha-galactosidase or pullulanase activity, since melibiose and pullulan are not substrates. Is not able to catalyze the hydrolysis or transglycosylation of maltoheptaose, suggesting that the TK1436 protein contains neither alpha-amylase nor 4-alpha-glucanotransferase activity. This is 1,4-alpha-glucan branching enzyme TK1436 from Thermococcus kodakarensis (strain ATCC BAA-918 / JCM 12380 / KOD1) (Pyrococcus kodakaraensis (strain KOD1)).